Consider the following 333-residue polypeptide: Endo-1,4-beta-xylanase (333 aa).

A signal peptide spans methionine 1–cysteine 17. Positions glutamine 18–glycine 330 constitute a GH10 domain. Glutamate 147 functions as the Proton donor in the catalytic mechanism. Glutamate 252 (nucleophile) is an active-site residue.

The protein belongs to the glycosyl hydrolase 10 (cellulase F) family.

It localises to the secreted. It catalyses the reaction Endohydrolysis of (1-&gt;4)-beta-D-xylosidic linkages in xylans.. The protein operates within glycan degradation; xylan degradation. Its function is as follows. Has xylanase activity. Seems to be involved in the release of sugars from the hemicellulolytic fraction in the compost. This chain is Endo-1,4-beta-xylanase (xlnA), found in Agaricus bisporus (White button mushroom).